Consider the following 232-residue polypeptide: 5'-methylthioadenosine/S-adenosylhomocysteine nucleosidase (232 aa).

Catalysis depends on E12, which acts as the Proton acceptor. Substrate contacts are provided by residues G78, I152, and 173–174; that span reads ME. Catalysis depends on D197, which acts as the Proton donor.

This sequence belongs to the PNP/UDP phosphorylase family. MtnN subfamily. As to quaternary structure, homodimer.

The catalysed reaction is S-adenosyl-L-homocysteine + H2O = S-(5-deoxy-D-ribos-5-yl)-L-homocysteine + adenine. The enzyme catalyses S-methyl-5'-thioadenosine + H2O = 5-(methylsulfanyl)-D-ribose + adenine. It catalyses the reaction 5'-deoxyadenosine + H2O = 5-deoxy-D-ribose + adenine. The protein operates within amino-acid biosynthesis; L-methionine biosynthesis via salvage pathway; S-methyl-5-thio-alpha-D-ribose 1-phosphate from S-methyl-5'-thioadenosine (hydrolase route): step 1/2. Functionally, catalyzes the irreversible cleavage of the glycosidic bond in both 5'-methylthioadenosine (MTA) and S-adenosylhomocysteine (SAH/AdoHcy) to adenine and the corresponding thioribose, 5'-methylthioribose and S-ribosylhomocysteine, respectively. Also cleaves 5'-deoxyadenosine, a toxic by-product of radical S-adenosylmethionine (SAM) enzymes, into 5-deoxyribose and adenine. Thus, is required for in vivo function of the radical SAM enzymes biotin synthase and lipoic acid synthase, that are inhibited by 5'-deoxyadenosine accumulation. The chain is 5'-methylthioadenosine/S-adenosylhomocysteine nucleosidase from Salmonella dublin (strain CT_02021853).